A 547-amino-acid polypeptide reads, in one-letter code: G protein-coupled receptor associated sorting protein 3 (547 aa).

Over residues 1 to 10 (MAGTKNKTRA) the composition is skewed to basic residues. 2 disordered regions span residues 1–32 (MAGT…EATG) and 80–102 (TLGK…STCK).

The protein belongs to the GPRASP family. As to quaternary structure, homodimer. As to expression, highly expressed in brain. Not expressed in lung or liver. Down-regulated in brain from patients suffering from Alzheimer disease.

It localises to the cytoplasm. The protein localises to the nucleus. Survival and differentiation promoting protein that plays a role in the regulation of neurosynaptogenesis. Induces phosphatase PP2A activity which results in APP dephosphorylation and inhibits BACE1-mediated processing of APP. The sequence is that of G protein-coupled receptor associated sorting protein 3 from Homo sapiens (Human).